A 178-amino-acid polypeptide reads, in one-letter code: NADH-quinone oxidoreductase subunit B 1 (178 aa).

Residues Cys-39, Cys-40, Cys-104, and Cys-135 each coordinate [4Fe-4S] cluster.

The protein belongs to the complex I 20 kDa subunit family. In terms of assembly, NDH-1 is composed of 14 different subunits. Subunits NuoB, C, D, E, F, and G constitute the peripheral sector of the complex. Requires [4Fe-4S] cluster as cofactor.

Its subcellular location is the cell inner membrane. The catalysed reaction is a quinone + NADH + 5 H(+)(in) = a quinol + NAD(+) + 4 H(+)(out). Functionally, NDH-1 shuttles electrons from NADH, via FMN and iron-sulfur (Fe-S) centers, to quinones in the respiratory chain. The immediate electron acceptor for the enzyme in this species is believed to be a menaquinone. Couples the redox reaction to proton translocation (for every two electrons transferred, four hydrogen ions are translocated across the cytoplasmic membrane), and thus conserves the redox energy in a proton gradient. This chain is NADH-quinone oxidoreductase subunit B 1, found in Cytophaga hutchinsonii (strain ATCC 33406 / DSM 1761 / CIP 103989 / NBRC 15051 / NCIMB 9469 / D465).